Here is a 341-residue protein sequence, read N- to C-terminus: MRVGVLTGGGDCPGLNAVIRAVVRKGIEVHGWDFVGFRNGWNGPLTGDSRPLGLNDVEDILTRGGTILRSSRTNPYKVEGGVDKIKQVLADQGVDALIAIGGEDTLGVAKRLTDDGIGVVGVPKTIDNDLGATDYTFGFDTAVSIATEAIDRLHTTAESHHRALVVEVMGRHAGWIALHSGLAGGASVILVPERHFNVDQVVSWVERRFEKEFAPIIVVAEGALPEGGEEKLLTGEKDAFGHVRLGGIGTWLADEIAHRTGKESRAVVLGHVQRGGTPTAYDRVLATRFGLNAVDAVADGDFGVMVALKGTDIVRVKLSEATAELKTVPVERYQEAEVFFG.

G10 lines the diphosphate pocket. E103 is a binding site for Mg(2+). Substrate contacts are provided by residues 125 to 127 (TID), R162, 169 to 171 (MGR), E221, R265, and 271 to 274 (HVQR). D127 serves as the catalytic Proton acceptor.

This sequence belongs to the phosphofructokinase type A (PFKA) family. Mixed-substrate PFK group III subfamily. In terms of assembly, homodimer or homotetramer. Requires Mg(2+) as cofactor.

It is found in the cytoplasm. The enzyme catalyses beta-D-fructose 6-phosphate + diphosphate = beta-D-fructose 1,6-bisphosphate + phosphate + H(+). The protein operates within carbohydrate degradation; glycolysis; D-glyceraldehyde 3-phosphate and glycerone phosphate from D-glucose: step 3/4. With respect to regulation, non-allosteric. Functionally, catalyzes the phosphorylation of D-fructose 6-phosphate, the first committing step of glycolysis. Uses inorganic phosphate (PPi) as phosphoryl donor instead of ATP like common ATP-dependent phosphofructokinases (ATP-PFKs), which renders the reaction reversible, and can thus function both in glycolysis and gluconeogenesis. Consistently, PPi-PFK can replace the enzymes of both the forward (ATP-PFK) and reverse (fructose-bisphosphatase (FBPase)) reactions. This chain is Pyrophosphate--fructose 6-phosphate 1-phosphotransferase, found in Amycolatopsis mediterranei (strain S699) (Nocardia mediterranei).